Consider the following 90-residue polypeptide: Acylphosphatase (90 aa).

The Acylphosphatase-like domain occupies 3-90; sequence HYHAIITGRV…AHYQDFRIKG (88 aa). Catalysis depends on residues Arg-18 and Asn-36.

It belongs to the acylphosphatase family.

It carries out the reaction an acyl phosphate + H2O = a carboxylate + phosphate + H(+). This Bacillus pumilus (strain SAFR-032) protein is Acylphosphatase (acyP).